Reading from the N-terminus, the 401-residue chain is Deubiquitinase and deneddylase Dub1 (401 aa).

The span at M1 to T11 shows a compositional bias: polar residues. The segment at M1 to L24 is disordered. Residues T40–F60 traverse the membrane as a helical segment. The tract at residues K77–P130 is disordered. The span at V86–P128 shows a compositional bias: pro residues. Active-site residues include H275, D292, and C345.

It belongs to the peptidase C48 family. In terms of assembly, binds to host NFKBIA.

The protein resides in the secreted. It is found in the host cell. The protein localises to the membrane. Functionally, effector proteins function to alter host cell physiology and promote bacterial survival in host tissues. This protease possesses deubiquitinating and deneddylating activities. Impairs ubiquitination and degradation of NF-kappa-B inhibitor alpha (NFKBIA), thereby preventing NF-kappa-B activation. In Chlamydia trachomatis serovar L2 (strain ATCC VR-902B / DSM 19102 / 434/Bu), this protein is Deubiquitinase and deneddylase Dub1 (cdu1).